We begin with the raw amino-acid sequence, 204 residues long: MEPISTITGKVVVLPVENIDTDQIIPARFLKVTDKSGLAAGLFEAWRYLPDGTLNPDFPLNRPEAAGATILISGRNFGCGSSREHAPWALQDYGFQAVIAPSFADIFRNNALKIGLLPVMVEQSVYDELVVMYANDPSMVLTIDLAAQIVALPDGRQVHFPIDAFSKYCLLHGVDQLGFLLQQEAAIAAYEAAHPQPVQTTVRR.

The protein belongs to the LeuD family. LeuD type 1 subfamily. Heterodimer of LeuC and LeuD.

The enzyme catalyses (2R,3S)-3-isopropylmalate = (2S)-2-isopropylmalate. The protein operates within amino-acid biosynthesis; L-leucine biosynthesis; L-leucine from 3-methyl-2-oxobutanoate: step 2/4. In terms of biological role, catalyzes the isomerization between 2-isopropylmalate and 3-isopropylmalate, via the formation of 2-isopropylmaleate. This Chloroflexus aggregans (strain MD-66 / DSM 9485) protein is 3-isopropylmalate dehydratase small subunit.